We begin with the raw amino-acid sequence, 262 residues long: tRNA pseudouridine synthase A (262 aa).

Asp52 functions as the Nucleophile in the catalytic mechanism. Tyr103 contacts substrate.

The protein belongs to the tRNA pseudouridine synthase TruA family.

The enzyme catalyses uridine(38/39/40) in tRNA = pseudouridine(38/39/40) in tRNA. Formation of pseudouridine at positions 38, 39 and 40 in the anticodon stem and loop of transfer RNAs. The chain is tRNA pseudouridine synthase A from Methanococcus maripaludis (strain C6 / ATCC BAA-1332).